A 334-amino-acid polypeptide reads, in one-letter code: Holliday junction branch migration complex subunit RuvB (334 aa).

A large ATPase domain (RuvB-L) region spans residues 4-184 (ADRLISAAVI…FGIVQRLEFY (181 aa)). Residues isoleucine 23, arginine 24, glycine 65, lysine 68, threonine 69, threonine 70, 131 to 133 (EDY), arginine 174, tyrosine 184, and arginine 221 each bind ATP. Threonine 69 contacts Mg(2+). Residues 185-255 (QVADLEHIVS…VAMKALDMLN (71 aa)) form a small ATPAse domain (RuvB-S) region. Residues 258-334 (AEGFDFMDRK…YKHFGITREE (77 aa)) are head domain (RuvB-H). DNA is bound by residues arginine 294, arginine 313, and arginine 318.

It belongs to the RuvB family. Homohexamer. Forms an RuvA(8)-RuvB(12)-Holliday junction (HJ) complex. HJ DNA is sandwiched between 2 RuvA tetramers; dsDNA enters through RuvA and exits via RuvB. An RuvB hexamer assembles on each DNA strand where it exits the tetramer. Each RuvB hexamer is contacted by two RuvA subunits (via domain III) on 2 adjacent RuvB subunits; this complex drives branch migration. In the full resolvosome a probable DNA-RuvA(4)-RuvB(12)-RuvC(2) complex forms which resolves the HJ.

It localises to the cytoplasm. The catalysed reaction is ATP + H2O = ADP + phosphate + H(+). In terms of biological role, the RuvA-RuvB-RuvC complex processes Holliday junction (HJ) DNA during genetic recombination and DNA repair, while the RuvA-RuvB complex plays an important role in the rescue of blocked DNA replication forks via replication fork reversal (RFR). RuvA specifically binds to HJ cruciform DNA, conferring on it an open structure. The RuvB hexamer acts as an ATP-dependent pump, pulling dsDNA into and through the RuvAB complex. RuvB forms 2 homohexamers on either side of HJ DNA bound by 1 or 2 RuvA tetramers; 4 subunits per hexamer contact DNA at a time. Coordinated motions by a converter formed by DNA-disengaged RuvB subunits stimulates ATP hydrolysis and nucleotide exchange. Immobilization of the converter enables RuvB to convert the ATP-contained energy into a lever motion, pulling 2 nucleotides of DNA out of the RuvA tetramer per ATP hydrolyzed, thus driving DNA branch migration. The RuvB motors rotate together with the DNA substrate, which together with the progressing nucleotide cycle form the mechanistic basis for DNA recombination by continuous HJ branch migration. Branch migration allows RuvC to scan DNA until it finds its consensus sequence, where it cleaves and resolves cruciform DNA. This is Holliday junction branch migration complex subunit RuvB from Yersinia pseudotuberculosis serotype O:1b (strain IP 31758).